The following is a 370-amino-acid chain: Coproporphyrin III ferrochelatase (370 aa).

Fe-coproporphyrin III is bound by residues Ser-58 and Tyr-127. Fe(2+) contacts are provided by His-189 and Glu-276.

This sequence belongs to the ferrochelatase family.

The protein localises to the cytoplasm. The enzyme catalyses Fe-coproporphyrin III + 2 H(+) = coproporphyrin III + Fe(2+). The protein operates within porphyrin-containing compound metabolism; protoheme biosynthesis. Its function is as follows. Involved in coproporphyrin-dependent heme b biosynthesis. Catalyzes the insertion of ferrous iron into coproporphyrin III to form Fe-coproporphyrin III. In Corynebacterium glutamicum (strain ATCC 13032 / DSM 20300 / JCM 1318 / BCRC 11384 / CCUG 27702 / LMG 3730 / NBRC 12168 / NCIMB 10025 / NRRL B-2784 / 534), this protein is Coproporphyrin III ferrochelatase.